Reading from the N-terminus, the 237-residue chain is NAD-dependent protein deacylase (237 aa).

The Deacetylase sirtuin-type domain maps to 1–235 (MRVVVLSGAG…PGLLQRLPAL (235 aa)). NAD(+) is bound at residue 8–28 (GAGISAESDVPTFRDDKNGLW). 2 residues coordinate substrate: Tyr-53 and Arg-56. 86-89 (QNVD) serves as a coordination point for NAD(+). His-104 functions as the Proton acceptor in the catalytic mechanism. Zn(2+) contacts are provided by Cys-112, Cys-115, Cys-138, and Cys-140. NAD(+) contacts are provided by residues 177 to 179 (GTS), 203 to 205 (NPE), and Ala-221.

Belongs to the sirtuin family. Class III subfamily. Requires Zn(2+) as cofactor.

The protein localises to the cytoplasm. It carries out the reaction N(6)-acetyl-L-lysyl-[protein] + NAD(+) + H2O = 2''-O-acetyl-ADP-D-ribose + nicotinamide + L-lysyl-[protein]. The enzyme catalyses N(6)-succinyl-L-lysyl-[protein] + NAD(+) + H2O = 2''-O-succinyl-ADP-D-ribose + nicotinamide + L-lysyl-[protein]. In terms of biological role, NAD-dependent lysine deacetylase and desuccinylase that specifically removes acetyl and succinyl groups on target proteins. Modulates the activities of several proteins which are inactive in their acylated form. In Mycobacterium leprae (strain TN), this protein is NAD-dependent protein deacylase.